The primary structure comprises 460 residues: UDP-N-acetylmuramoylalanine--D-glutamate ligase (460 aa).

Glycine 115–threonine 121 provides a ligand contact to ATP.

The protein belongs to the MurCDEF family.

Its subcellular location is the cytoplasm. The enzyme catalyses UDP-N-acetyl-alpha-D-muramoyl-L-alanine + D-glutamate + ATP = UDP-N-acetyl-alpha-D-muramoyl-L-alanyl-D-glutamate + ADP + phosphate + H(+). It participates in cell wall biogenesis; peptidoglycan biosynthesis. Functionally, cell wall formation. Catalyzes the addition of glutamate to the nucleotide precursor UDP-N-acetylmuramoyl-L-alanine (UMA). This is UDP-N-acetylmuramoylalanine--D-glutamate ligase from Chlorobium luteolum (strain DSM 273 / BCRC 81028 / 2530) (Pelodictyon luteolum).